Here is a 404-residue protein sequence, read N- to C-terminus: O-antigen ligase (404 aa).

11 consecutive transmembrane segments (helical) span residues I16–D32, H39–R55, S67–L84, F96–L115, V127–I147, S168–R183, L189–W221, W228–I246, I324–Y343, Y363–V379, and Q385–L401.

Belongs to the O-antigen ligase family.

Its subcellular location is the cell inner membrane. It carries out the reaction a lipid-linked O antigen + a lipid A-core oligosaccharide = a lipopolysaccharide + a polyisoprenyl diphosphate.. It functions in the pathway bacterial outer membrane biogenesis; lipopolysaccharide biosynthesis. Functionally, transferase involved in the biosynthesis of the lipopolysaccharide (LPS). Catalyzes the transfer of a polymerized O-antigen molecule from its polyprenyl diphosphate membrane anchor to a terminal sugar of the lipid A-core oligosaccharide, finalizing the biosynthesis of the lipopolysaccharide. May also be involved in a feedback mechanism to regulate O-unit synthesis, based on the availability of O units on the periplasmic face of the membrane. This is O-antigen ligase from Salmonella typhimurium (strain LT2 / SGSC1412 / ATCC 700720).